An 81-amino-acid chain; its full sequence is Cell division protein ZapB (81 aa).

A coiled-coil region spans residues 5-81 (LEVFEKLESK…QALLGRMEEV (77 aa)). The disordered stretch occupies residues 43–64 (VHSAQNGREELERENQQLREQQ). The span at 49–59 (GREELERENQQ) shows a compositional bias: basic and acidic residues.

Belongs to the ZapB family. In terms of assembly, homodimer. The ends of the coiled-coil dimer bind to each other, forming polymers. Interacts with FtsZ.

It is found in the cytoplasm. Its function is as follows. Non-essential, abundant cell division factor that is required for proper Z-ring formation. It is recruited early to the divisome by direct interaction with FtsZ, stimulating Z-ring assembly and thereby promoting cell division earlier in the cell cycle. Its recruitment to the Z-ring requires functional FtsA or ZipA. The sequence is that of Cell division protein ZapB from Enterobacter sp. (strain 638).